Here is a 640-residue protein sequence, read N- to C-terminus: (Z)-beta-ocimene synthase TPS13PK, chloroplastic (640 aa).

The N-terminal 95 residues, 1-95 (MAALVSTVSS…PFKDEAYVKR (95 aa)), are a transit peptide targeting the chloroplast. The segment at 50–69 (MSTNNNNNNNQKNSSRRSAN) is disordered. Polar residues predominate over residues 60–69 (QKNSSRRSAN). Residues R334, D371, D375, R515, and D518 each coordinate (2E)-geranyl diphosphate. Mg(2+) is bound by residues D371 and D375. A DDXXD motif motif is present at residues 371–375 (DDIYD). Mg(2+) is bound by residues D518, T522, and E526.

The protein belongs to the terpene synthase family. As to quaternary structure, monomer. The cofactor is Mg(2+).

It localises to the plastid. Its subcellular location is the chloroplast. It catalyses the reaction (2E)-geranyl diphosphate = (Z)-beta-ocimene + diphosphate. It participates in secondary metabolite biosynthesis; terpenoid biosynthesis. Functionally, involved in monoterpene (C10) olefins biosynthesis, constituants of cannabinoids and terpenoids-rich resins. Catalyzes mainly the conversion of (2E)-geranyl diphosphate to (Z)-beta-ocimene. This is (Z)-beta-ocimene synthase TPS13PK, chloroplastic from Cannabis sativa (Hemp).